The chain runs to 61 residues: Large ribosomal subunit protein bL32 (61 aa).

The span at 1–16 (MPTPKKKTSRSKRDMR) shows a compositional bias: basic residues. A disordered region spans residues 1–47 (MPTPKKKTSRSKRDMRRSHDGLTAPAIAVEKKTGELVRPHRAHKGAD). Residues 29–38 (VEKKTGELVR) are compositionally biased toward basic and acidic residues.

This sequence belongs to the bacterial ribosomal protein bL32 family.

The polypeptide is Large ribosomal subunit protein bL32 (Bdellovibrio bacteriovorus (strain ATCC 15356 / DSM 50701 / NCIMB 9529 / HD100)).